The sequence spans 199 residues: NADH-quinone oxidoreductase subunit B 2 (199 aa).

[4Fe-4S] cluster is bound by residues C78, C79, C143, and C173.

This sequence belongs to the complex I 20 kDa subunit family. As to quaternary structure, NDH-1 is composed of 14 different subunits. Subunits NuoB, C, D, E, F, and G constitute the peripheral sector of the complex. It depends on [4Fe-4S] cluster as a cofactor.

It is found in the cell inner membrane. The enzyme catalyses a quinone + NADH + 5 H(+)(in) = a quinol + NAD(+) + 4 H(+)(out). NDH-1 shuttles electrons from NADH, via FMN and iron-sulfur (Fe-S) centers, to quinones in the respiratory chain. The immediate electron acceptor for the enzyme in this species is believed to be ubiquinone. Couples the redox reaction to proton translocation (for every two electrons transferred, four hydrogen ions are translocated across the cytoplasmic membrane), and thus conserves the redox energy in a proton gradient. This is NADH-quinone oxidoreductase subunit B 2 from Rhodopseudomonas palustris (strain BisB5).